Here is an 89-residue protein sequence, read N- to C-terminus: Large ribosomal subunit protein bL27 (89 aa).

Residues 1 to 26 (MAHKKAGGSSKNGRDSNAQRRGVKRF) form a disordered region.

The protein belongs to the bacterial ribosomal protein bL27 family.

The sequence is that of Large ribosomal subunit protein bL27 from Maridesulfovibrio salexigens (strain ATCC 14822 / DSM 2638 / NCIMB 8403 / VKM B-1763) (Desulfovibrio salexigens).